The following is a 393-amino-acid chain: Probable alpha-1,6-mannosyltransferase MNN10 (393 aa).

At 1–52 the chain is on the cytoplasmic side; the sequence is MSSVPYNSQLPISNHLEYDEDEKKSRGSKLGLKYKMIYWRKTLCSSLARWRK. Residues 53–73 form a helical; Signal-anchor for type II membrane protein membrane-spanning segment; that stretch reads LILLISLALFLFIWISDSTIS. The Lumenal portion of the chain corresponds to 74-393; that stretch reads RNPSTTSFQG…RKWYTRFFFP (320 aa). The tract at residues 77–97 is disordered; the sequence is STTSFQGQNSNDNKLSNTGSS.

The protein belongs to the glycosyltransferase 34 family. Component of the M-Pol II complex composed of ANP1, MNN9, MNN10, MNN11 and HOC1.

The protein localises to the endoplasmic reticulum membrane. It is found in the golgi apparatus. The protein resides in the cis-Golgi network membrane. Functionally, required for polarized growth and efficient budding. In terms of biological role, the M-Pol II complex possesses alpha-1,6-mannosyltransferase activity and is probably involved in the elongation of the mannan backbone of N-linked glycans on cell wall and periplasmic proteins. This Saccharomyces cerevisiae (strain ATCC 204508 / S288c) (Baker's yeast) protein is Probable alpha-1,6-mannosyltransferase MNN10 (MNN10).